The following is a 531-amino-acid chain: Tyrosine/DOPA decarboxylase 2 (531 aa).

Position 319 is an N6-(pyridoxal phosphate)lysine (Lys-319).

The protein belongs to the group II decarboxylase family. In terms of assembly, homodimer. Pyridoxal 5'-phosphate is required as a cofactor. Predominantly expressed in the roots and stems, while a lower level expression is seen in the sepals and carpels of fully expanded flowers.

It catalyses the reaction L-tyrosine + H(+) = tyramine + CO2. The enzyme catalyses L-dopa + H(+) = dopamine + CO2. It carries out the reaction 5-hydroxy-L-tryptophan + H(+) = serotonin + CO2. Its function is as follows. Marginally higher substrate specificity for L-DOPA over L-tyrosine. The sequence is that of Tyrosine/DOPA decarboxylase 2 (TYDC2) from Papaver somniferum (Opium poppy).